Consider the following 1191-residue polypeptide: Roquin-2 (1191 aa).

Cys-14, Cys-17, Cys-33, His-35, Cys-38, Cys-50, and Asp-53 together coordinate Zn(2+). The RING-type; degenerate zinc finger occupies 14–54 (CPICYNEFDENVHKPISLGCSHTVCKTCLNKLHRKACPFDQ). Residues 91–170 (ENKHYEVAKK…RTVTELILQH (80 aa)) are HEPN-N. The segment at 171–325 (QNPQQLSANL…SIIDKLQSPE (155 aa)) is ROQ. The tract at residues 326-396 (SFAKSVQELT…GLVDFIQNYS (71 aa)) is HEPN-C. Residues 410–438 (KYKTSMCRDLRQQGGCPRGTNCTFAHSQE) form a C3H1-type zinc finger. Disordered regions lie at residues 528-576 (GANG…NSVP) and 644-680 (ESSL…PQPY). A compositionally biased stretch (polar residues) spans 530–546 (NGQNAAGPSADSVTENK). Ser-549 is modified (phosphoserine). Polar residues predominate over residues 554-576 (PVSNVAATSAGPSNVGTELNSVP). 3 positions are modified to phosphoserine: Ser-808, Ser-983, and Ser-1119.

In terms of assembly, interacts with EDC4. Interacts with CCR4-NOT deadenylase complex. Interacts with MAP3K5; the interaction is probably stimulus-dependent. Proteolytically cleaved after Arg-509 and Arg-585 by MALT1 in activated CD4(+) T cells; cleavage at Arg-509 and Arg-585 is critical for promoting RC3H1 degradation in response to T-cell receptor (TCR) stimulation, and hence is necessary for prolonging the stability of a set of mRNAs controlling Th17 cell differentiation. Expressed in spleen, testis, ovary and small intestine.

The protein localises to the cytoplasm. The protein resides in the P-body. It carries out the reaction S-ubiquitinyl-[E2 ubiquitin-conjugating enzyme]-L-cysteine + [acceptor protein]-L-lysine = [E2 ubiquitin-conjugating enzyme]-L-cysteine + N(6)-ubiquitinyl-[acceptor protein]-L-lysine.. It functions in the pathway protein modification; protein ubiquitination. With respect to regulation, binding to dsRNA, but not CDE RNA, crosstalks with the E3 ubiquitin ligase activity and may inhibit ubiquitination. Post-transcriptional repressor of mRNAs containing a conserved stem loop motif, called constitutive decay element (CDE), which is often located in the 3'-UTR, as in HMGXB3, ICOS, IER3, NFKBID, NFKBIZ, PPP1R10, TNF and in many more mRNAs. Binds to CDE and promotes mRNA deadenylation and degradation. This process does not involve miRNAs. In follicular helper T (Tfh) cells, represses of ICOS and TNFRSF4 expression, thus preventing spontaneous Tfh cell differentiation, germinal center B-cell differentiation in the absence of immunization and autoimmunity. In resting or LPS-stimulated macrophages, controls inflammation by suppressing TNF expression. Also recognizes CDE in its own mRNA and in that of paralogous RC3H1, possibly leading to feedback loop regulation. miRNA-binding protein that regulates microRNA homeostasis. Enhances DICER-mediated processing of pre-MIR146a but reduces mature MIR146a levels through an increase of 3' end uridylation. Both inhibits ICOS mRNA expression and they may act together to exert the suppression. Acts as a ubiquitin E3 ligase. Pairs with E2 enzymes UBE2B, UBE2D2, UBE2E2, UBE2E3, UBE2G2, UBE2K and UBE2Q2 and produces polyubiquitin chains. Shows the strongest activity when paired with UBE2N:UBE2V1 or UBE2N:UBE2V2 E2 complexes and generate both short and long polyubiquitin chains. Involved in the ubiquitination of MAP3K5. Able to interact with double-stranded RNA (dsRNA). In Homo sapiens (Human), this protein is Roquin-2 (RC3H2).